The primary structure comprises 229 residues: Urease accessory protein UreF (229 aa).

The protein belongs to the UreF family. As to quaternary structure, ureD, UreF and UreG form a complex that acts as a GTP-hydrolysis-dependent molecular chaperone, activating the urease apoprotein by helping to assemble the nickel containing metallocenter of UreC. The UreE protein probably delivers the nickel.

It is found in the cytoplasm. Functionally, required for maturation of urease via the functional incorporation of the urease nickel metallocenter. In Ralstonia pickettii (strain 12J), this protein is Urease accessory protein UreF.